The sequence spans 74 residues: Large ribosomal subunit protein bL31 (74 aa).

Zn(2+) is bound by residues Cys-16, Cys-18, Cys-38, and Cys-41.

Belongs to the bacterial ribosomal protein bL31 family. Type A subfamily. As to quaternary structure, part of the 50S ribosomal subunit. Zn(2+) serves as cofactor.

Its function is as follows. Binds the 23S rRNA. This is Large ribosomal subunit protein bL31 from Salinispora tropica (strain ATCC BAA-916 / DSM 44818 / JCM 13857 / NBRC 105044 / CNB-440).